Here is a 628-residue protein sequence, read N- to C-terminus: FAD-linked oxidoreductase easE (628 aa).

The N-terminal stretch at 1–20 (MSHRILCVAFCVCSLVAVSS) is a signal peptide. One can recognise an FAD-binding PCMH-type domain in the interval 144–328 (HQGRIPLYSA…TRATMRVHLN (185 aa)). Residue His182 is modified to Pros-8alpha-FAD histidine. Asn343, Asn382, and Asn487 each carry an N-linked (GlcNAc...) asparagine glycan.

This sequence belongs to the oxygen-dependent FAD-linked oxidoreductase family. FAD serves as cofactor.

The protein operates within alkaloid biosynthesis; ergot alkaloid biosynthesis. Functionally, FAD binding oxidoreductase; part of the gene cluster that mediates the biosynthesis of fumiclavanine C, a fungal ergot alkaloid. DmaW catalyzes the first step of ergot alkaloid biosynthesis by condensing dimethylallyl diphosphate (DMAP) and tryptophan to form 4-dimethylallyl-L-tryptophan. The second step is catalyzed by the methyltransferase easF that methylates 4-dimethylallyl-L-tryptophan in the presence of S-adenosyl-L-methionine, resulting in the formation of 4-dimethylallyl-L-abrine. The catalase easC and the FAD-dependent oxidoreductase easE then transform 4-dimethylallyl-L-abrine to chanoclavine-I which is further oxidized by EasD in the presence of NAD(+), resulting in the formation of chanoclavine-I aldehyde. EasA reduces chanoclavine-I aldehyde to dihydrochanoclavine-I aldehyde that spontaneously dehydrates to form 6,8-dimethyl-6,7-didehydroergoline. EasG then catalyzes the reduction of 6,8-dimethyl-6,7-didehydroergoline to form festuclavine. Hydrolysis of festuclavine by easM then leads to the formation of fumigaclavine B which is in turn acetylated by easN to fumigaclavine A. Finally, easL catalyzes the conversion of fumigaclavine A into fumigaclavine C by attaching a dimethylallyl moiety to C-2 of the indole nucleus. This Aspergillus fumigatus (strain ATCC MYA-4609 / CBS 101355 / FGSC A1100 / Af293) (Neosartorya fumigata) protein is FAD-linked oxidoreductase easE.